Consider the following 203-residue polypeptide: Thymidylate kinase (203 aa).

ATP is bound at residue 10 to 17 (GIDGSGKS).

It belongs to the thymidylate kinase family.

The enzyme catalyses dTMP + ATP = dTDP + ADP. Its function is as follows. Phosphorylation of dTMP to form dTDP in both de novo and salvage pathways of dTTP synthesis. This is Thymidylate kinase from Brachyspira hyodysenteriae (strain ATCC 49526 / WA1).